The primary structure comprises 112 residues: Integration host factor subunit alpha (112 aa).

Belongs to the bacterial histone-like protein family. As to quaternary structure, heterodimer of an alpha and a beta chain.

This protein is one of the two subunits of integration host factor, a specific DNA-binding protein that functions in genetic recombination as well as in transcriptional and translational control. The protein is Integration host factor subunit alpha of Sinorhizobium medicae (strain WSM419) (Ensifer medicae).